We begin with the raw amino-acid sequence, 203 residues long: MAHGPRYRVPFRRRREGKTNYRKRLKLLKSGKPRLVVRKSLNHHIAQIIVYDPKGDRTLVSAHTRELIRDFGWKGHCGNTPSAYLLGLLIGYKAKKAGIEEAILDIGLHPPVRGSSIFAVLKGAIDAGLNVPHSPEIFPEDYRIRGEHIAEYARMLKEQDEDRFRRQFGGYLEKGLDPEKLPEHFEEVKARIIEKFESEGARE.

It belongs to the universal ribosomal protein uL18 family. In terms of assembly, part of the 50S ribosomal subunit. Contacts the 5S and 23S rRNAs.

Functionally, this is one of the proteins that bind and probably mediate the attachment of the 5S RNA into the large ribosomal subunit, where it forms part of the central protuberance. This chain is Large ribosomal subunit protein uL18, found in Pyrococcus horikoshii (strain ATCC 700860 / DSM 12428 / JCM 9974 / NBRC 100139 / OT-3).